A 144-amino-acid polypeptide reads, in one-letter code: Large ribosomal subunit protein uL15 (144 aa).

Residues 1-57 (MKLNDLSPAPGSRREKHRPGRGIGSGLGKTGGRGHKGQSSRSGGTIAPGFEGGQQPL) are disordered. Residues 21-31 (RGIGSGLGKTG) show a composition bias toward gly residues.

It belongs to the universal ribosomal protein uL15 family. As to quaternary structure, part of the 50S ribosomal subunit.

Its function is as follows. Binds to the 23S rRNA. This Pseudomonas savastanoi pv. phaseolicola (strain 1448A / Race 6) (Pseudomonas syringae pv. phaseolicola (strain 1448A / Race 6)) protein is Large ribosomal subunit protein uL15.